The sequence spans 232 residues: Large ribosomal subunit protein uL1 (232 aa).

The protein belongs to the universal ribosomal protein uL1 family. Part of the 50S ribosomal subunit.

Binds directly to 23S rRNA. The L1 stalk is quite mobile in the ribosome, and is involved in E site tRNA release. Its function is as follows. Protein L1 is also a translational repressor protein, it controls the translation of the L11 operon by binding to its mRNA. The chain is Large ribosomal subunit protein uL1 from Burkholderia mallei (strain NCTC 10247).